We begin with the raw amino-acid sequence, 297 residues long: Homoserine kinase (297 aa).

Position 82 to 92 (82 to 92) interacts with ATP; the sequence is PLTRGLGSSAS.

Belongs to the GHMP kinase family. Homoserine kinase subfamily.

Its subcellular location is the cytoplasm. The enzyme catalyses L-homoserine + ATP = O-phospho-L-homoserine + ADP + H(+). The protein operates within amino-acid biosynthesis; L-threonine biosynthesis; L-threonine from L-aspartate: step 4/5. Catalyzes the ATP-dependent phosphorylation of L-homoserine to L-homoserine phosphate. This is Homoserine kinase from Bacillus cereus (strain ZK / E33L).